Here is a 190-residue protein sequence, read N- to C-terminus: Crossover junction endodeoxyribonuclease RuvC (190 aa).

Residues aspartate 8, glutamate 67, and aspartate 139 contribute to the active site. Mg(2+) contacts are provided by aspartate 8, glutamate 67, and aspartate 139.

Belongs to the RuvC family. Homodimer which binds Holliday junction (HJ) DNA. The HJ becomes 2-fold symmetrical on binding to RuvC with unstacked arms; it has a different conformation from HJ DNA in complex with RuvA. In the full resolvosome a probable DNA-RuvA(4)-RuvB(12)-RuvC(2) complex forms which resolves the HJ. Mg(2+) is required as a cofactor.

It is found in the cytoplasm. It catalyses the reaction Endonucleolytic cleavage at a junction such as a reciprocal single-stranded crossover between two homologous DNA duplexes (Holliday junction).. The RuvA-RuvB-RuvC complex processes Holliday junction (HJ) DNA during genetic recombination and DNA repair. Endonuclease that resolves HJ intermediates. Cleaves cruciform DNA by making single-stranded nicks across the HJ at symmetrical positions within the homologous arms, yielding a 5'-phosphate and a 3'-hydroxyl group; requires a central core of homology in the junction. The consensus cleavage sequence is 5'-(A/T)TT(C/G)-3'. Cleavage occurs on the 3'-side of the TT dinucleotide at the point of strand exchange. HJ branch migration catalyzed by RuvA-RuvB allows RuvC to scan DNA until it finds its consensus sequence, where it cleaves and resolves the cruciform DNA. This Haemophilus influenzae (strain PittEE) protein is Crossover junction endodeoxyribonuclease RuvC.